Here is a 502-residue protein sequence, read N- to C-terminus: ATP synthase subunit alpha (502 aa).

Residues 114–139 (PIDGRGPIETSKTRPIESPAPGVMDR) form a disordered region. Residue 169-176 (GDRQTGKT) participates in ATP binding.

This sequence belongs to the ATPase alpha/beta chains family. As to quaternary structure, F-type ATPases have 2 components, CF(1) - the catalytic core - and CF(0) - the membrane proton channel. CF(1) has five subunits: alpha(3), beta(3), gamma(1), delta(1), epsilon(1). CF(0) has three main subunits: a(1), b(2) and c(9-12). The alpha and beta chains form an alternating ring which encloses part of the gamma chain. CF(1) is attached to CF(0) by a central stalk formed by the gamma and epsilon chains, while a peripheral stalk is formed by the delta and b chains.

The protein resides in the cell membrane. The enzyme catalyses ATP + H2O + 4 H(+)(in) = ADP + phosphate + 5 H(+)(out). Its function is as follows. Produces ATP from ADP in the presence of a proton gradient across the membrane. The alpha chain is a regulatory subunit. The sequence is that of ATP synthase subunit alpha from Halalkalibacterium halodurans (strain ATCC BAA-125 / DSM 18197 / FERM 7344 / JCM 9153 / C-125) (Bacillus halodurans).